A 415-amino-acid chain; its full sequence is Histidine--tRNA ligase (415 aa).

Belongs to the class-II aminoacyl-tRNA synthetase family. As to quaternary structure, homodimer.

It localises to the cytoplasm. It carries out the reaction tRNA(His) + L-histidine + ATP = L-histidyl-tRNA(His) + AMP + diphosphate + H(+). The protein is Histidine--tRNA ligase of Clostridium botulinum (strain Langeland / NCTC 10281 / Type F).